Here is a 175-residue protein sequence, read N- to C-terminus: Crossover junction endodeoxyribonuclease RuvC (175 aa).

Residues Asp16, Glu76, and Asp148 contribute to the active site. Mg(2+) is bound by residues Asp16, Glu76, and Asp148.

This sequence belongs to the RuvC family. As to quaternary structure, homodimer which binds Holliday junction (HJ) DNA. The HJ becomes 2-fold symmetrical on binding to RuvC with unstacked arms; it has a different conformation from HJ DNA in complex with RuvA. In the full resolvosome a probable DNA-RuvA(4)-RuvB(12)-RuvC(2) complex forms which resolves the HJ. The cofactor is Mg(2+).

It is found in the cytoplasm. The enzyme catalyses Endonucleolytic cleavage at a junction such as a reciprocal single-stranded crossover between two homologous DNA duplexes (Holliday junction).. The RuvA-RuvB-RuvC complex processes Holliday junction (HJ) DNA during genetic recombination and DNA repair. Endonuclease that resolves HJ intermediates. Cleaves cruciform DNA by making single-stranded nicks across the HJ at symmetrical positions within the homologous arms, yielding a 5'-phosphate and a 3'-hydroxyl group; requires a central core of homology in the junction. The consensus cleavage sequence is 5'-(A/T)TT(C/G)-3'. Cleavage occurs on the 3'-side of the TT dinucleotide at the point of strand exchange. HJ branch migration catalyzed by RuvA-RuvB allows RuvC to scan DNA until it finds its consensus sequence, where it cleaves and resolves the cruciform DNA. This is Crossover junction endodeoxyribonuclease RuvC from Bradyrhizobium sp. (strain ORS 278).